Reading from the N-terminus, the 325-residue chain is Aldo-keto reductase family 1 member D1 (325 aa).

Residues 22 to 26 and D52 contribute to the NADP(+) site; that span reads GLGTY. Y26 serves as a coordination point for substrate. Residues Y57, W88, E119, and Y131 each contribute to the substrate site. Y57 (proton donor) is an active-site residue. NADP(+)-binding positions include 168–169, Q192, and 218–223; these read SN and HSPLGT. The residue at position 228 (S228) is a Phosphoserine. A substrate-binding site is contributed by W229. An NADP(+)-binding site is contributed by 272–282; the sequence is KSFTPERIKEN.

This sequence belongs to the aldo/keto reductase family.

The protein resides in the cytoplasm. It carries out the reaction 5beta-cholestan-3-one + NADP(+) = cholest-4-en-3-one + NADPH + H(+). The catalysed reaction is 4,5beta-dihydrocortisone + NADP(+) = cortisone + NADPH + H(+). The enzyme catalyses cortisol + NADPH + H(+) = 5beta-dihydrocortisol + NADP(+). It catalyses the reaction corticosterone + NADPH + H(+) = 5beta-dihydrocorticosterone + NADP(+). It carries out the reaction 7alpha,12alpha-dihydroxycholest-4-en-3-one + NADPH + H(+) = 7alpha,12alpha-dihydroxy-5beta-cholestan-3-one + NADP(+). The catalysed reaction is 7alpha-hydroxycholest-4-en-3-one + NADPH + H(+) = 7alpha-hydroxy-5beta-cholestan-3-one + NADP(+). The enzyme catalyses epitestosterone + NADPH + H(+) = 5beta-dihydroepitestosterone + NADP(+). It catalyses the reaction androst-4-ene-3,17-dione + NADPH + H(+) = 5beta-androstane-3,17-dione + NADP(+). It carries out the reaction progesterone + NADPH + H(+) = 5beta-pregnan-3,20-dione + NADP(+). The catalysed reaction is 21-hydroxyprogesterone + NADPH + H(+) = 5beta-dihydrodeoxycorticosterone + NADP(+). The enzyme catalyses aldosterone + NADPH + H(+) = 5beta-dihydroaldosterone + NADP(+). It catalyses the reaction 17beta-hydroxyandrosta-1,4-dien-3-one + NADPH + H(+) = 17beta-hydroxy-5beta-androst-1-en-3-one + NADP(+). It carries out the reaction 17beta-hydroxyestr-4-en-3-one + NADPH + H(+) = 17beta-hydroxy-5beta-estran-3-one + NADP(+). The catalysed reaction is 5beta-dihydrotestosterone + NADP(+) = testosterone + NADPH + H(+). The enzyme catalyses androst-4-ene-3,11,17-trione + NADPH + H(+) = 17beta-hydroxyandrost-4-ene-3,11-dione + NADP(+). With respect to regulation, subject to inhibition by high substrate concentrations. Inhibited by testosterone concentrations above 10 uM. Inhibited by the primary and secondary bile acids chenodeoxycholic acid and ursodeoxycholic acid. Catalyzes the stereospecific NADPH-dependent reduction of the C4-C5 double bond of bile acid intermediates and steroid hormones carrying a delta(4)-3-one structure to yield an A/B cis-ring junction. This cis-configuration is crucial for bile acid biosynthesis and plays important roles in steroid metabolism. Capable of reducing a broad range of delta-(4)-3-ketosteroids from C18 (such as, 17beta-hydroxyestr-4-en-3-one) to C27 (such as, 7alpha-hydroxycholest-4-en-3-one). This is Aldo-keto reductase family 1 member D1 (Akr1d1) from Mus musculus (Mouse).